Reading from the N-terminus, the 625-residue chain is Clathrin interactor 1 (625 aa).

Residues 16-149 (NVVMNYSEIE…QDDDRLREER (134 aa)) form the ENTH domain. An a 1,2-diacyl-sn-glycero-3-phospho-(1D-myo-inositol-4,5-bisphosphate)-binding site is contributed by arginine 29. Residues 52-54 (FMY) form an interaction with VTI1B region. Arginine 67 lines the a 1,2-diacyl-sn-glycero-3-phospho-(1D-myo-inositol-4,5-bisphosphate) pocket. Interaction with VTI1B stretches follow at residues 94-96 (SER) and 142-153 (DDRLREERKKAK). Phosphoserine is present on residues serine 163, serine 166, serine 173, serine 205, serine 210, serine 227, serine 245, and serine 299. A disordered region spans residues 219 to 331 (FRRKDREDSP…SSGDLVDLFD (113 aa)). Residues 222–239 (KDREDSPERCSDSDEEKK) are compositionally biased toward basic and acidic residues. The residue at position 308 (threonine 308) is a Phosphothreonine. Low complexity predominate over residues 308–323 (TPQSSVKTSVPSSKSS). At serine 312 the chain carries Phosphoserine. The segment at 340–352 (SADLFGGFADFGS) is interaction with AP1G1, AP1G2 and GGA2. Residues 368–380 (GNGDFGDWSAFNQ) are interaction with AP1G1 and AP1G2. Residue serine 624 is modified to Phosphoserine.

It belongs to the epsin family. As to quaternary structure, binds clathrin heavy chain and AP-2. Interacts with VTI1B. Interacts with GGA2 (via GAE domain). Interacts with AP1G1 (via GAE domain). Interacts with AP1G2 (via GAE domain). As to expression, ubiquitously expressed at low to intermediate levels.

The protein resides in the cytoplasm. It is found in the perinuclear region. Its subcellular location is the membrane. The protein localises to the cytoplasmic vesicle. It localises to the clathrin-coated vesicle. Functionally, binds to membranes enriched in phosphatidylinositol 4,5-bisphosphate (PtdIns(4,5)P2). May have a role in transport via clathrin-coated vesicles from the trans-Golgi network to endosomes. Stimulates clathrin assembly. This Homo sapiens (Human) protein is Clathrin interactor 1 (CLINT1).